We begin with the raw amino-acid sequence, 892 residues long: Alpha-actinin-1 (892 aa).

N-acetylmethionine is present on methionine 1. Residues 1 to 247 (MDHYDSQQTN…IMTYVSSFYH (247 aa)) form an actin-binding region. Serine 6 is modified (phosphoserine). Tyrosine 12 carries the post-translational modification Phosphotyrosine; by FAK1. Calponin-homology (CH) domains lie at 31-135 (KQQR…LRFA) and 144-250 (TSAK…HAFS). N6-acetyllysine is present on residues lysine 95 and lysine 195. Spectrin repeat units follow at residues 274-384 (QLME…WLLN), 394-499 (HLAE…ALER), 509-620 (QLYL…ALTE), and 630-733 (RLRK…EVEN). The interaction with DDN stretch occupies residues 274–733 (QLMEDYEKLA…IARTINEVEN (460 aa)). Position 471 is a phosphoserine (serine 471). The residue at position 676 (lysine 676) is an N6-acetyllysine. Serine 677 carries the phosphoserine modification. 2 consecutive EF-hand domains span residues 746 to 781 (EQMN…LGYD) and 787 to 822 (QGEA…ETAD). Ca(2+) contacts are provided by aspartate 759, aspartate 761, serine 763, threonine 765, and glutamate 770. Serine 890 is modified (phosphoserine).

Belongs to the alpha-actinin family. Homodimer; antiparallel. Interacts with MYOZ2, TTID and LPP. Interacts with DDN. Interacts with PSD. Interacts with MICALL2. Interacts with DNM2 and CTTN. Interacts with PDLIM1. Interacts with PDLIM2. Interacts with PDLIM4 (via PDZ domain). Interacts with IGSF8.

The protein localises to the cytoplasm. It is found in the cytoskeleton. The protein resides in the myofibril. Its subcellular location is the sarcomere. It localises to the z line. The protein localises to the cell membrane. It is found in the cell junction. The protein resides in the cell projection. Its subcellular location is the ruffle. F-actin cross-linking protein which is thought to anchor actin to a variety of intracellular structures. Association with IGSF8 regulates the immune synapse formation and is required for efficient T-cell activation. This chain is Alpha-actinin-1 (ACTN1), found in Macaca fascicularis (Crab-eating macaque).